The chain runs to 212 residues: Large ribosomal subunit protein uL4 (212 aa).

Polar residues predominate over residues 54-65; that stretch reads SQKSRSDVSGSN. Residues 54–85 are disordered; it reads SQKSRSDVSGSNKKPWRQKGTGRARSGSVKSP.

This sequence belongs to the universal ribosomal protein uL4 family. Part of the 50S ribosomal subunit.

One of the primary rRNA binding proteins, this protein initially binds near the 5'-end of the 23S rRNA. It is important during the early stages of 50S assembly. It makes multiple contacts with different domains of the 23S rRNA in the assembled 50S subunit and ribosome. Its function is as follows. Forms part of the polypeptide exit tunnel. The sequence is that of Large ribosomal subunit protein uL4 from Blochmanniella floridana.